A 258-amino-acid chain; its full sequence is Imidazole glycerol phosphate synthase subunit HisF (258 aa).

Active-site residues include aspartate 11 and aspartate 130.

This sequence belongs to the HisA/HisF family. As to quaternary structure, heterodimer of HisH and HisF.

It localises to the cytoplasm. It carries out the reaction 5-[(5-phospho-1-deoxy-D-ribulos-1-ylimino)methylamino]-1-(5-phospho-beta-D-ribosyl)imidazole-4-carboxamide + L-glutamine = D-erythro-1-(imidazol-4-yl)glycerol 3-phosphate + 5-amino-1-(5-phospho-beta-D-ribosyl)imidazole-4-carboxamide + L-glutamate + H(+). It participates in amino-acid biosynthesis; L-histidine biosynthesis; L-histidine from 5-phospho-alpha-D-ribose 1-diphosphate: step 5/9. In terms of biological role, IGPS catalyzes the conversion of PRFAR and glutamine to IGP, AICAR and glutamate. The HisF subunit catalyzes the cyclization activity that produces IGP and AICAR from PRFAR using the ammonia provided by the HisH subunit. This Shigella boydii serotype 18 (strain CDC 3083-94 / BS512) protein is Imidazole glycerol phosphate synthase subunit HisF.